We begin with the raw amino-acid sequence, 232 residues long: Glutathione S-transferase U10 (232 aa).

Residues 6-85 (SKVILHGTWI…YIDETWTNSP (80 aa)) enclose the GST N-terminal domain. Residues 16 to 17 (ST), 42 to 43 (NK), 56 to 57 (KI), and 69 to 70 (ES) contribute to the glutathione site. The 136-residue stretch at 91–226 (DPYERAQVRF…FIQKYRQKCL (136 aa)) folds into the GST C-terminal domain.

Belongs to the GST superfamily. Tau family.

Its subcellular location is the cytoplasm. The protein localises to the cytosol. It carries out the reaction RX + glutathione = an S-substituted glutathione + a halide anion + H(+). In terms of biological role, may be involved in the conjugation of reduced glutathione to a wide number of exogenous and endogenous hydrophobic electrophiles and have a detoxification role against certain herbicides. The chain is Glutathione S-transferase U10 (GSTU10) from Arabidopsis thaliana (Mouse-ear cress).